Here is a 204-residue protein sequence, read N- to C-terminus: Ribonuclease HII (204 aa).

Residues 1–197 (MTLGIDEAGR…KNRILNPKLL (197 aa)) form the RNase H type-2 domain. D6, E7, and D103 together coordinate a divalent metal cation.

Belongs to the RNase HII family. The cofactor is Mn(2+). Requires Mg(2+) as cofactor.

The protein resides in the cytoplasm. It carries out the reaction Endonucleolytic cleavage to 5'-phosphomonoester.. Its function is as follows. Endonuclease that specifically degrades the RNA of RNA-DNA hybrids. The chain is Ribonuclease HII from Helicobacter pylori (strain HPAG1).